The chain runs to 579 residues: Putative truncated flagellar export/assembly protein LfhA (579 aa).

A run of 3 helical transmembrane segments spans residues 86–106 (AIAG…IGIF), 124–144 (IGDG…AAII), and 177–197 (FVLA…SALL).

The protein belongs to the FHIPEP (flagella/HR/invasion proteins export pore) family.

It localises to the cell inner membrane. In Escherichia coli (strain K12), this protein is Putative truncated flagellar export/assembly protein LfhA.